The following is a 565-amino-acid chain: Laccase-12 (565 aa).

The N-terminal stretch at 1-24 (MTTVHTFSILLFFCSLFSASLIIA) is a signal peptide. 2 Plastocyanin-like domains span residues 32 to 148 (VIQE…PTPG) and 158 to 310 (RQTA…YKKT). Residue asparagine 78 is glycosylated (N-linked (GlcNAc...) asparagine). The Cu cation site is built by histidine 82, histidine 84, histidine 127, and histidine 129. N-linked (GlcNAc...) asparagine glycosylation is found at asparagine 187, asparagine 203, asparagine 298, asparagine 325, asparagine 377, asparagine 387, asparagine 395, and asparagine 428. In terms of domain architecture, Plastocyanin-like 3 spans 413–549 (DFPSKPPVKF…AMAFLVDNGV (137 aa)). The Cu cation site is built by histidine 466, histidine 469, histidine 471, histidine 528, cysteine 529, histidine 530, and histidine 534.

The protein belongs to the multicopper oxidase family. The cofactor is Cu cation. As to expression, predominantly expressed in the inflorescence stem.

It localises to the secreted. The protein resides in the extracellular space. The protein localises to the apoplast. It carries out the reaction 4 hydroquinone + O2 = 4 benzosemiquinone + 2 H2O. Lignin degradation and detoxification of lignin-derived products. In Arabidopsis thaliana (Mouse-ear cress), this protein is Laccase-12 (LAC12).